The sequence spans 92 residues: MAQLTPKAIEERLSSLPAWKLQAPEIERVVEFSDFVAAMAFVNKVAEKAELAGHHPDIDIRYNRVRLALVTHDAGGLTERDFDLAASIEALL.

It belongs to the pterin-4-alpha-carbinolamine dehydratase family.

The enzyme catalyses (4aS,6R)-4a-hydroxy-L-erythro-5,6,7,8-tetrahydrobiopterin = (6R)-L-erythro-6,7-dihydrobiopterin + H2O. In Acidobacterium capsulatum (strain ATCC 51196 / DSM 11244 / BCRC 80197 / JCM 7670 / NBRC 15755 / NCIMB 13165 / 161), this protein is Putative pterin-4-alpha-carbinolamine dehydratase.